The primary structure comprises 773 residues: Pentatricopeptide repeat-containing protein At1g76280 (773 aa).

PPR repeat units follow at residues 130 to 165, 166 to 200, 201 to 231, 235 to 269, 332 to 369, 370 to 400, 402 to 436, 524 to 558, 559 to 593, 594 to 628, and 629 to 663; these read DSRS…RISP, LLPI…RVGK, NGIT…YVNH, DILS…ALRG, LRWS…NLKP, YDST…ISEC, YSYP…KLRP, GTPT…GCPA, DVAT…GFSP, KAVT…EIHL, and DVLS…KVNP.

The protein belongs to the PPR family. P subfamily.

The protein is Pentatricopeptide repeat-containing protein At1g76280 of Arabidopsis thaliana (Mouse-ear cress).